Consider the following 343-residue polypeptide: Cytoplasmic tRNA 2-thiolation protein 1 (343 aa).

This sequence belongs to the TtcA family. CTU1/NCS6/ATPBD3 subfamily.

It localises to the cytoplasm. It participates in tRNA modification; 5-methoxycarbonylmethyl-2-thiouridine-tRNA biosynthesis. Plays a central role in 2-thiolation of mcm(5)S(2)U at tRNA wobble positions of tRNA(Lys), tRNA(Glu) and tRNA(Gln). Directly binds tRNAs and probably acts by catalyzing adenylation of tRNAs, an intermediate required for 2-thiolation. It is unclear whether it acts as a sulfurtransferase that transfers sulfur from thiocarboxylated URM1 onto the uridine of tRNAs at wobble position. This Drosophila mojavensis (Fruit fly) protein is Cytoplasmic tRNA 2-thiolation protein 1.